A 382-amino-acid chain; its full sequence is ATP phosphoribosyltransferase regulatory subunit (382 aa).

Belongs to the class-II aminoacyl-tRNA synthetase family. HisZ subfamily. As to quaternary structure, heteromultimer composed of HisG and HisZ subunits.

It is found in the cytoplasm. It functions in the pathway amino-acid biosynthesis; L-histidine biosynthesis; L-histidine from 5-phospho-alpha-D-ribose 1-diphosphate: step 1/9. Its function is as follows. Required for the first step of histidine biosynthesis. May allow the feedback regulation of ATP phosphoribosyltransferase activity by histidine. This Burkholderia ambifaria (strain ATCC BAA-244 / DSM 16087 / CCUG 44356 / LMG 19182 / AMMD) (Burkholderia cepacia (strain AMMD)) protein is ATP phosphoribosyltransferase regulatory subunit.